The following is a 398-amino-acid chain: Carbamoyl phosphate synthase large chain (398 aa).

The 187-residue stretch at 1-187 (KLGVPQPEGG…LAKIAAKVIV (187 aa)) folds into the ATP-grasp domain. Residues 1–255 (KLGVPQPEGG…YKAELAADNV (255 aa)) are carbamoyl phosphate synthetic domain. The ATP site is built by arginine 32, aspartate 71, leucine 73, glutamate 78, glycine 103, valine 104, histidine 105, serine 106, glutamine 146, and glutamate 158. Glutamine 146, glutamate 158, and asparagine 160 together coordinate Mg(2+). Mn(2+)-binding residues include glutamine 146, glutamate 158, and asparagine 160. The MGS-like domain maps to 254-395 (NVLPLTGKVF…NEYHKEMEEE (142 aa)). The tract at residues 256–398 (LPLTGKVFLS…HKEMEEENKV (143 aa)) is allosteric domain.

It belongs to the CarB family. In terms of assembly, composed of two chains; the small (or glutamine) chain promotes the hydrolysis of glutamine to ammonia, which is used by the large (or ammonia) chain to synthesize carbamoyl phosphate. Tetramer of heterodimers (alpha,beta)4. It depends on Mg(2+) as a cofactor. Mn(2+) serves as cofactor.

It catalyses the reaction hydrogencarbonate + L-glutamine + 2 ATP + H2O = carbamoyl phosphate + L-glutamate + 2 ADP + phosphate + 2 H(+). It carries out the reaction hydrogencarbonate + NH4(+) + 2 ATP = carbamoyl phosphate + 2 ADP + phosphate + 2 H(+). It functions in the pathway amino-acid biosynthesis; L-arginine biosynthesis; carbamoyl phosphate from bicarbonate: step 1/1. The protein operates within pyrimidine metabolism; UMP biosynthesis via de novo pathway; (S)-dihydroorotate from bicarbonate: step 1/3. Functionally, large subunit of the glutamine-dependent carbamoyl phosphate synthetase (CPSase). CPSase catalyzes the formation of carbamoyl phosphate from the ammonia moiety of glutamine, carbonate, and phosphate donated by ATP, constituting the first step of 2 biosynthetic pathways, one leading to arginine and/or urea and the other to pyrimidine nucleotides. The large subunit (synthetase) binds the substrates ammonia (free or transferred from glutamine from the small subunit), hydrogencarbonate and ATP and carries out an ATP-coupled ligase reaction, activating hydrogencarbonate by forming carboxy phosphate which reacts with ammonia to form carbamoyl phosphate. This is Carbamoyl phosphate synthase large chain from Methanosarcina barkeri.